The sequence spans 328 residues: HTH-type transcriptional regulator MalR (328 aa).

Positions 2-57 constitute an HTH lacI-type domain; the sequence is PVTIKDVAKAAGVSPSTVTRVIQNKSTISDETKKRVRKAMKELNYHPNLNARSLVS. A DNA-binding region (H-T-H motif) is located at residues 5-24; it reads IKDVAKAAGVSPSTVTRVIQ. Positions 173–218 are inducer binding; sequence TEYFIKKGCKRIAFIGGSKKLFVTKDRLTGYEQALKHYKLTTDNNR. The dimerization stretch occupies residues 282–291; the sequence is NLAAYVDINS.

Functionally, transcriptional repressor of the maltosaccharide utilization operons malxCD and malMP. The polypeptide is HTH-type transcriptional regulator MalR (malR) (Streptococcus pneumoniae serotype 4 (strain ATCC BAA-334 / TIGR4)).